A 254-amino-acid polypeptide reads, in one-letter code: Triosephosphate isomerase (254 aa).

A substrate-binding site is contributed by 9–11 (NWK). Residue His-96 is the Electrophile of the active site. Catalysis depends on Glu-168, which acts as the Proton acceptor. Residues Gly-174 and Ser-213 each contribute to the substrate site.

The protein belongs to the triosephosphate isomerase family. In terms of assembly, homodimer.

It is found in the cytoplasm. It catalyses the reaction D-glyceraldehyde 3-phosphate = dihydroxyacetone phosphate. Its pathway is carbohydrate biosynthesis; gluconeogenesis. It participates in carbohydrate degradation; glycolysis; D-glyceraldehyde 3-phosphate from glycerone phosphate: step 1/1. Involved in the gluconeogenesis. Catalyzes stereospecifically the conversion of dihydroxyacetone phosphate (DHAP) to D-glyceraldehyde-3-phosphate (G3P). This is Triosephosphate isomerase from Buchnera aphidicola subsp. Schizaphis graminum (strain Sg).